A 136-amino-acid chain; its full sequence is uncharacterized protein (136 aa).

Residues 1–19 (MKKLLMVILGIALIGMAYA) form the signal peptide.

This is an uncharacterized protein from Methanocaldococcus jannaschii (strain ATCC 43067 / DSM 2661 / JAL-1 / JCM 10045 / NBRC 100440) (Methanococcus jannaschii).